Consider the following 250-residue polypeptide: 3-deoxy-manno-octulosonate cytidylyltransferase (250 aa).

It belongs to the KdsB family.

It localises to the cytoplasm. The catalysed reaction is 3-deoxy-alpha-D-manno-oct-2-ulosonate + CTP = CMP-3-deoxy-beta-D-manno-octulosonate + diphosphate. The protein operates within nucleotide-sugar biosynthesis; CMP-3-deoxy-D-manno-octulosonate biosynthesis; CMP-3-deoxy-D-manno-octulosonate from 3-deoxy-D-manno-octulosonate and CTP: step 1/1. Its pathway is bacterial outer membrane biogenesis; lipopolysaccharide biosynthesis. Functionally, activates KDO (a required 8-carbon sugar) for incorporation into bacterial lipopolysaccharide in Gram-negative bacteria. The sequence is that of 3-deoxy-manno-octulosonate cytidylyltransferase from Legionella pneumophila (strain Paris).